The following is a 669-amino-acid chain: Translation factor GUF1, mitochondrial (669 aa).

A mitochondrion-targeting transit peptide spans 1–49 (MWTLAGQGWWRGRALAAWVTEAARKGLLWPHLAPARGTAAESRAPDRCY). The tr-type G domain maps to 66 to 247 (ENTRNFSIIA…AVIKRIPFPK (182 aa)). GTP is bound by residues 75 to 82 (AHVDHGKS), 140 to 144 (DTPGH), and 194 to 197 (NKID).

This sequence belongs to the TRAFAC class translation factor GTPase superfamily. Classic translation factor GTPase family. LepA subfamily.

It is found in the mitochondrion inner membrane. It carries out the reaction GTP + H2O = GDP + phosphate + H(+). Promotes mitochondrial protein synthesis. May act as a fidelity factor of the translation reaction, by catalyzing a one-codon backward translocation of tRNAs on improperly translocated ribosomes. Binds to mitochondrial ribosomes in a GTP-dependent manner. This chain is Translation factor GUF1, mitochondrial, found in Bos taurus (Bovine).